Reading from the N-terminus, the 283-residue chain is Polyamine aminopropyltransferase (283 aa).

The PABS domain maps to 2–237 (ELWYTEEHTD…GHWLFGFASK (236 aa)). Glutamine 31 provides a ligand contact to S-methyl-5'-thioadenosine. Residues histidine 62 and aspartate 86 each contribute to the spermidine site. S-methyl-5'-thioadenosine-binding positions include glutamate 106 and 137 to 138 (DG). Aspartate 155 functions as the Proton acceptor in the catalytic mechanism. 155-158 (DSTD) contacts spermidine. Proline 162 contributes to the S-methyl-5'-thioadenosine binding site.

This sequence belongs to the spermidine/spermine synthase family. Homodimer or homotetramer.

It is found in the cytoplasm. The catalysed reaction is S-adenosyl 3-(methylsulfanyl)propylamine + putrescine = S-methyl-5'-thioadenosine + spermidine + H(+). It functions in the pathway amine and polyamine biosynthesis; spermidine biosynthesis; spermidine from putrescine: step 1/1. Its function is as follows. Catalyzes the irreversible transfer of a propylamine group from the amino donor S-adenosylmethioninamine (decarboxy-AdoMet) to putrescine (1,4-diaminobutane) to yield spermidine. This is Polyamine aminopropyltransferase from Clostridium perfringens (strain SM101 / Type A).